Consider the following 101-residue polypeptide: Small ribosomal subunit protein uS14 (101 aa).

The tract at residues 48–69 (LSKLPRDSSPSRHRSRCELSGR) is disordered. A compositionally biased stretch (basic and acidic residues) spans 51-68 (LPRDSSPSRHRSRCELSG).

Belongs to the universal ribosomal protein uS14 family. In terms of assembly, part of the 30S ribosomal subunit. Contacts proteins S3 and S10.

In terms of biological role, binds 16S rRNA, required for the assembly of 30S particles and may also be responsible for determining the conformation of the 16S rRNA at the A site. This Stenotrophomonas maltophilia (strain R551-3) protein is Small ribosomal subunit protein uS14.